Here is a 401-residue protein sequence, read N- to C-terminus: Shugoshin (401 aa).

Positions 3–49 (SKVEQQYKLLNAELMDQVQKQRLEIGEYRKRVISLEREIMDIREEHV) form a coiled coil. Positions 82 to 197 (EPAPAAQINR…VEETQTEQNE (116 aa)) are disordered. Basic and acidic residues predominate over residues 98-108 (SSREICKDMRR). Low complexity predominate over residues 114-137 (RTTRPISPRRSSSVTSTVSSTSRR). S124, S125, and S126 each carry phosphoserine; by AurB. Positions 171 to 183 (VFDEDDSDDDFDE) are enriched in acidic residues. T331 carries the post-translational modification Phosphothreonine; by PLK1. Residues 338–401 (EEMPSIRTRS…GSKGKAKAKK (64 aa)) are disordered. The segment covering 348–377 (RTAANKKSENTDMSSSFCNNSARPSRSCRP) has biased composition (polar residues). Over residues 387–401 (NKLRNGSKGKAKAKK) the composition is skewed to basic residues.

The protein belongs to the shugoshin family. As to quaternary structure, homodimer. Interacts with Incenp. Phosphorylation by polo-like kinase (PLK) on Thr-331 antagonizes cohesive function. Phosphorylation on Thr-331 at the metaphase anaphase transition leads to its dissociation from centromeres. In contrast, phosphorylation by aurB/ial on either Ser-124, Ser-125 or Ser-126 is required for association with centromeres.

It localises to the chromosome. Its subcellular location is the centromere. Its function is as follows. Plays a central role in chromosome cohesion during meiosis and mitosis by preventing premature dissociation of cohesin complex from centromeres after prophase, when most of cohesin complex dissociates from chromosomes arms. May act by protecting or Rad21 from cleavage by Sse/separase. Required during meiosis in both males and females. This is Shugoshin (mei-S332) from Drosophila melanogaster (Fruit fly).